A 127-amino-acid chain; its full sequence is Small ribosomal subunit protein uS11 (127 aa).

Belongs to the universal ribosomal protein uS11 family. Part of the 30S ribosomal subunit. Interacts with proteins S7 and S18. Binds to IF-3.

Located on the platform of the 30S subunit, it bridges several disparate RNA helices of the 16S rRNA. Forms part of the Shine-Dalgarno cleft in the 70S ribosome. In Ruthia magnifica subsp. Calyptogena magnifica, this protein is Small ribosomal subunit protein uS11.